Here is a 263-residue protein sequence, read N- to C-terminus: Ribonuclease HII (263 aa).

The RNase H type-2 domain maps to 71–262; it reads KAIAGIDEVG…VKSMCCDSTN (192 aa). The a divalent metal cation site is built by Asp77, Glu78, and Asp172.

It belongs to the RNase HII family. Requires Mn(2+) as cofactor. Mg(2+) is required as a cofactor.

The protein resides in the cytoplasm. The enzyme catalyses Endonucleolytic cleavage to 5'-phosphomonoester.. Its function is as follows. Endonuclease that specifically degrades the RNA of RNA-DNA hybrids. The chain is Ribonuclease HII from Streptococcus pyogenes serotype M1.